An 812-amino-acid polypeptide reads, in one-letter code: Xaa-Pro dipeptidyl-peptidase (812 aa).

Catalysis depends on charge relay system residues serine 372, aspartate 492, and histidine 523.

The protein belongs to the peptidase S15 family. In terms of assembly, homodimer.

It localises to the cytoplasm. The enzyme catalyses Hydrolyzes Xaa-Pro-|- bonds to release unblocked, N-terminal dipeptides from substrates including Ala-Pro-|-p-nitroanilide and (sequentially) Tyr-Pro-|-Phe-Pro-|-Gly-Pro-|-Ile.. Its function is as follows. Removes N-terminal dipeptides sequentially from polypeptides having unsubstituted N-termini provided that the penultimate residue is proline. The chain is Xaa-Pro dipeptidyl-peptidase from Pediococcus pentosaceus (strain ATCC 25745 / CCUG 21536 / LMG 10740 / 183-1w).